The following is a 208-amino-acid chain: Ribosomal RNA large subunit methyltransferase E (208 aa).

Gly61, Trp63, Asp81, Asp97, and Asp122 together coordinate S-adenosyl-L-methionine. Residue Lys162 is the Proton acceptor of the active site.

The protein belongs to the class I-like SAM-binding methyltransferase superfamily. RNA methyltransferase RlmE family.

The protein resides in the cytoplasm. It carries out the reaction uridine(2552) in 23S rRNA + S-adenosyl-L-methionine = 2'-O-methyluridine(2552) in 23S rRNA + S-adenosyl-L-homocysteine + H(+). Its function is as follows. Specifically methylates the uridine in position 2552 of 23S rRNA at the 2'-O position of the ribose in the fully assembled 50S ribosomal subunit. This chain is Ribosomal RNA large subunit methyltransferase E, found in Pseudomonas entomophila (strain L48).